The sequence spans 140 residues: Large ribosomal subunit protein uL16 (140 aa).

It belongs to the universal ribosomal protein uL16 family. Part of the 50S ribosomal subunit.

Its function is as follows. Binds 23S rRNA and is also seen to make contacts with the A and possibly P site tRNAs. This is Large ribosomal subunit protein uL16 from Phytoplasma mali (strain AT).